The primary structure comprises 77 residues: Large ribosomal subunit protein uL29 (77 aa).

The protein belongs to the universal ribosomal protein uL29 family.

This Mycobacterium sp. (strain JLS) protein is Large ribosomal subunit protein uL29.